The primary structure comprises 215 residues: Uracil phosphoribosyltransferase (215 aa).

30 to 34 (KGMVR) is a GTP binding site. Residues Arg-80, Arg-105, and 139–147 (DPMIATAST) contribute to the 5-phospho-alpha-D-ribose 1-diphosphate site. Uracil-binding positions include Ile-202 and 207 to 209 (GDA). 5-phospho-alpha-D-ribose 1-diphosphate is bound at residue Asp-208.

This sequence belongs to the UPRTase family. Mg(2+) is required as a cofactor.

The enzyme catalyses UMP + diphosphate = 5-phospho-alpha-D-ribose 1-diphosphate + uracil. The protein operates within pyrimidine metabolism; UMP biosynthesis via salvage pathway; UMP from uracil: step 1/1. Its activity is regulated as follows. Allosterically activated by GTP. In terms of biological role, catalyzes the conversion of uracil and 5-phospho-alpha-D-ribose 1-diphosphate (PRPP) to UMP and diphosphate. This chain is Uracil phosphoribosyltransferase, found in Metallosphaera sedula (strain ATCC 51363 / DSM 5348 / JCM 9185 / NBRC 15509 / TH2).